The sequence spans 564 residues: Potassium-transporting ATPase potassium-binding subunit (564 aa).

A run of 10 helical transmembrane segments spans residues 4–24 (YDYW…PFLG), 67–87 (TLAL…ILLF), 135–155 (VGLT…LVAL), 179–199 (LYGL…QGVP), 258–278 (FEVA…GHYV), 286–306 (AIIG…LWAE), 382–402 (AGLY…GLMI), 420–440 (LLVV…AIAA), 487–507 (LMLG…VLAL), and 528–548 (GPLF…LTFL).

The protein belongs to the KdpA family. In terms of assembly, the system is composed of three essential subunits: KdpA, KdpB and KdpC.

The protein localises to the cell inner membrane. Part of the high-affinity ATP-driven potassium transport (or Kdp) system, which catalyzes the hydrolysis of ATP coupled with the electrogenic transport of potassium into the cytoplasm. This subunit binds the periplasmic potassium ions and delivers the ions to the membrane domain of KdpB through an intramembrane tunnel. The sequence is that of Potassium-transporting ATPase potassium-binding subunit from Pseudomonas fluorescens (strain Pf0-1).